A 395-amino-acid chain; its full sequence is Elongation factor Tu (395 aa).

Residues 10–205 (KPHCNIGTIG…AVDSYIPQPE (196 aa)) form the tr-type G domain. The G1 stretch occupies residues 19 to 26 (GHVDHGKT). Position 19–26 (19–26 (GHVDHGKT)) interacts with GTP. Residue T26 coordinates Mg(2+). The tract at residues 60-64 (GITIA) is G2. The segment at 81–84 (DCPG) is G3. Residues 81–85 (DCPGH) and 136–139 (NKMD) contribute to the GTP site. Positions 136 to 139 (NKMD) are G4. A G5 region spans residues 173-175 (SAL).

This sequence belongs to the TRAFAC class translation factor GTPase superfamily. Classic translation factor GTPase family. EF-Tu/EF-1A subfamily. In terms of assembly, monomer.

The protein localises to the cytoplasm. The enzyme catalyses GTP + H2O = GDP + phosphate + H(+). Its function is as follows. GTP hydrolase that promotes the GTP-dependent binding of aminoacyl-tRNA to the A-site of ribosomes during protein biosynthesis. In Acidiphilium cryptum (strain JF-5), this protein is Elongation factor Tu.